The primary structure comprises 757 residues: UDP-N-acetylmuramoyl-L-alanyl-D-glutamate--2,6-diaminopimelate ligase MurE homolog, chloroplastic (757 aa).

Residues 1 to 11 (MATAPLAFHLP) are compositionally biased toward low complexity. Residues 1–53 (MATAPLAFHLPFPFPSASRPPPRLLPPSRRPPAARLAATRRFRPPTADDEPPE) constitute a chloroplast transit peptide. 3 disordered regions span residues 1-112 (MATA…DEFF), 126-152 (FTRRGLIKPSAPAPSQPEEEDGLADEL), and 172-195 (VSLADEEDEEANGGGGGVDYGDDG). Residues 12 to 30 (FPFPSASRPPPRLLPPSRR) show a composition bias toward pro residues. 2 stretches are compositionally biased toward acidic residues: residues 47–56 (ADDEPPEAAE) and 142–152 (PEEEDGLADEL).

This sequence belongs to the MurCDEF family. MurE subfamily. Component of the plastid-encoded plastid RNA polymerase (PEP) complex.

The protein resides in the plastid. Its subcellular location is the chloroplast. Required for the activity of the plastid-encoded RNA polymerase (PEP) and full expression of genes transcribed by PEP. This Oryza sativa subsp. japonica (Rice) protein is UDP-N-acetylmuramoyl-L-alanyl-D-glutamate--2,6-diaminopimelate ligase MurE homolog, chloroplastic.